A 229-amino-acid polypeptide reads, in one-letter code: Putative germin-like protein 12-4 (229 aa).

Positions 1–22 (MAASNFFLLTAFIALVATQAMA) are cleaved as a signal peptide. A disulfide bridge connects residues C32 and C47. Positions 62–217 (ANLDKPMDTT…AFQVDKKAMD (156 aa)) constitute a Cupin type-1 domain. N-linked (GlcNAc...) asparagine glycosylation is present at N78. Positions 111, 113, 118, and 162 each coordinate Mn(2+).

This sequence belongs to the germin family. As to quaternary structure, oligomer (believed to be a pentamer but probably hexamer).

The protein localises to the secreted. The protein resides in the extracellular space. Its subcellular location is the apoplast. In terms of biological role, may play a role in plant defense. Probably has no oxalate oxidase activity even if the active site is conserved. This Oryza sativa subsp. japonica (Rice) protein is Putative germin-like protein 12-4.